A 418-amino-acid polypeptide reads, in one-letter code: Magnesium-chelatase subunit ChlI-2, chloroplastic (418 aa).

A chloroplast-targeting transit peptide spans 1 to 55 (MASLLGRSPSSILTCPRISSPSSTSSMSHLCFGPEKLSGRIQFNPKKNRSRYHVS). N-acetylvaline is present on valine 56. Intrachain disulfides connect cysteine 96/cysteine 187 and cysteine 348/cysteine 390. 113–120 (GDRGTGKS) is an ATP binding site.

The protein belongs to the Mg-chelatase subunits D/I family. In terms of assembly, the magnesium chelatase complex is a heterotrimer consisting of subunits CHLI, CHLD and CHLH. As to expression, expressed in leaves.

Its subcellular location is the plastid. The protein resides in the chloroplast. The enzyme catalyses protoporphyrin IX + Mg(2+) + ATP + H2O = Mg-protoporphyrin IX + ADP + phosphate + 3 H(+). It functions in the pathway porphyrin-containing compound metabolism; chlorophyll biosynthesis. With respect to regulation, redox regulation; active in reducing conditions, inactive in oxidizing conditions. Thioredoxins f and m mediate the reversible reductive activation of oxidized CHLI2. Involved in chlorophyll biosynthesis. Catalyzes the insertion of magnesium ion into protoporphyrin IX to yield Mg-protoporphyrin IX. The reaction takes place in two steps, with an ATP-dependent activation followed by an ATP-dependent chelation step. Possesses low affinity for ATP and may play a limited role in chlorophyll biosynthesis, and contributes to the assembly of the Mg-chelatase complex. The sequence is that of Magnesium-chelatase subunit ChlI-2, chloroplastic (CHLI2) from Arabidopsis thaliana (Mouse-ear cress).